A 203-amino-acid polypeptide reads, in one-letter code: ATP-dependent Clp protease proteolytic subunit 2 (203 aa).

The Nucleophile role is filled by serine 101. The active site involves histidine 126.

This sequence belongs to the peptidase S14 family. Fourteen ClpP subunits assemble into 2 heptameric rings which stack back to back to give a disk-like structure with a central cavity, resembling the structure of eukaryotic proteasomes.

It localises to the cytoplasm. The catalysed reaction is Hydrolysis of proteins to small peptides in the presence of ATP and magnesium. alpha-casein is the usual test substrate. In the absence of ATP, only oligopeptides shorter than five residues are hydrolyzed (such as succinyl-Leu-Tyr-|-NHMec, and Leu-Tyr-Leu-|-Tyr-Trp, in which cleavage of the -Tyr-|-Leu- and -Tyr-|-Trp bonds also occurs).. Cleaves peptides in various proteins in a process that requires ATP hydrolysis. Has a chymotrypsin-like activity. Plays a major role in the degradation of misfolded proteins. In Prochlorococcus marinus (strain MIT 9312), this protein is ATP-dependent Clp protease proteolytic subunit 2.